A 109-amino-acid chain; its full sequence is uncharacterized protein (109 aa).

The next 2 membrane-spanning stretches (helical) occupy residues 24–44 and 68–88; these read SLGILMGGSTSCMVGMNSAFV and VIVLFNTLVFRSPLFLFSIFI.

The protein localises to the membrane. This is an uncharacterized protein from Saccharomyces cerevisiae (strain ATCC 204508 / S288c) (Baker's yeast).